Reading from the N-terminus, the 156-residue chain is MGRLISVSFGLLVVFLSLSGTGADQDCLPGWSSHEGHCYKVFNLDKTWEDAEKFCTEQANSGHLVSIDSKKEANFVAELVSQNIKETRRTDFVWIGLRAEDKRQHCSSEWSDGSSINYQNWIEAESKKCLGLEKQTRYRKWVNLNCGQPYRFTCEI.

An N-terminal signal peptide occupies residues M1–A23. Cystine bridges form between C27-C38, C55-C154, and C129-C146. The 122-residue stretch at H34–E155 folds into the C-type lectin domain.

The protein belongs to the snaclec family. In terms of assembly, heterodimer; disulfide-linked. As to expression, expressed by the venom gland.

Its subcellular location is the secreted. Functionally, interferes with one step of hemostasis (modulation of platelet aggregation, or coagulation cascade, for example). In Macrovipera lebetinus (Levantine viper), this protein is Snaclec A2.